Consider the following 240-residue polypeptide: Probable septum site-determining protein MinC (240 aa).

Belongs to the MinC family. As to quaternary structure, interacts with MinD and FtsZ.

Functionally, cell division inhibitor that blocks the formation of polar Z ring septums. Rapidly oscillates between the poles of the cell to destabilize FtsZ filaments that have formed before they mature into polar Z rings. Prevents FtsZ polymerization. This is Probable septum site-determining protein MinC from Acinetobacter baumannii (strain ACICU).